The sequence spans 601 residues: Glutathione-regulated potassium-efflux system protein KefB (601 aa).

Helical transmembrane passes span 4-24 (ADLLTAGVLFLFAAVAAVPLA), 29-49 (IGAVLGYLLAGIAIGPWGLGF), 55-75 (EILHFSELGVVFLMFIIGLEL), 87-107 (IFGVGAAQVLLSAAVLAGLLM), 111-131 (FLWQAAVVGGIGLAMSSTAMA), 152-172 (VLLFQDLAVIPALALVPLLAG), 177-197 (HFDWFKVAMKVLAFAVMLIGG), 207-227 (FIAASGVREVFTAATLLLVLS), 230-250 (LFMDALGLSMALGTFIAGVLL), 262-282 (AIDPFKGLLLGLFFISVGMSL), 284-304 (LGVLYTHLLWVAASVVILVVI), 324-344 (MQFASVLSQGGEFAFVLFSTA), and 356-376 (ALLLVTVTLSMMTTPLLMKGI). The RCK N-terminal domain occupies 400 to 519 (KPQVIVVGFG…AGVTQFSRET (120 aa)).

The protein belongs to the monovalent cation:proton antiporter 2 (CPA2) transporter (TC 2.A.37) family. KefB subfamily. As to quaternary structure, interacts with the regulatory subunit KefG.

The protein localises to the cell inner membrane. Functionally, pore-forming subunit of a potassium efflux system that confers protection against electrophiles. Catalyzes K(+)/H(+) antiport. This Salmonella newport (strain SL254) protein is Glutathione-regulated potassium-efflux system protein KefB.